A 491-amino-acid chain; its full sequence is GTPase Der (491 aa).

2 EngA-type G domains span residues 3-166 (PVVA…AEAM) and 200-373 (IKLA…DSAT). Residues 9–16 (GRPNVGKS), 56–60 (DTGGI), 118–121 (NKVD), 206–213 (GKPNVGKS), 253–257 (DTAGV), and 318–321 (NKWD) each bind GTP. The KH-like domain occupies 374-458 (RRVSTSMLTR…PIQIRFQEGD (85 aa)). Residues 472–491 (QERRRKRALSHINDRKTKGE) are disordered.

It belongs to the TRAFAC class TrmE-Era-EngA-EngB-Septin-like GTPase superfamily. EngA (Der) GTPase family. In terms of assembly, associates with the 50S ribosomal subunit.

GTPase that plays an essential role in the late steps of ribosome biogenesis. This is GTPase Der from Shewanella denitrificans (strain OS217 / ATCC BAA-1090 / DSM 15013).